We begin with the raw amino-acid sequence, 547 residues long: Chaperonin GroEL (547 aa).

Residues 30–33 (TLGP), Lys51, 87–91 (DGTTT), Gly414, 478–480 (NAA), and Asp494 contribute to the ATP site.

It belongs to the chaperonin (HSP60) family. In terms of assembly, forms a cylinder of 14 subunits composed of two heptameric rings stacked back-to-back. Interacts with the co-chaperonin GroES.

It is found in the cytoplasm. The enzyme catalyses ATP + H2O + a folded polypeptide = ADP + phosphate + an unfolded polypeptide.. Its function is as follows. Together with its co-chaperonin GroES, plays an essential role in assisting protein folding. The GroEL-GroES system forms a nano-cage that allows encapsulation of the non-native substrate proteins and provides a physical environment optimized to promote and accelerate protein folding. In Klebsiella pneumoniae, this protein is Chaperonin GroEL.